The primary structure comprises 534 residues: 26S proteasome non-ATPase regulatory subunit 3 (534 aa).

Residues 1-16 (MKQEGSARRRGADKAK) are compositionally biased toward basic and acidic residues. Residues 1–69 (MKQEGSARRR…AEHSQRELDT (69 aa)) are disordered. Positions 17 to 32 (PPPGGGEQEPPPPPAP) are enriched in pro residues. Residue Lys-38 forms a Glycyl lysine isopeptide (Lys-Gly) (interchain with G-Cter in SUMO1); alternate linkage. Lys-38 participates in a covalent cross-link: Glycyl lysine isopeptide (Lys-Gly) (interchain with G-Cter in SUMO2); alternate. The region spanning 286–465 (ARYLYYTGRI…GYVQSKEMID (180 aa)) is the PCI domain. A phosphoserine mark is found at Ser-418 and Ser-430. Residues 500–534 (SYNKDLESAEERREREQQDLEFAKEMAEDDDDSFP) are disordered. The span at 501 to 525 (YNKDLESAEERREREQQDLEFAKEM) shows a compositional bias: basic and acidic residues.

It belongs to the proteasome subunit S3 family. Component of the 19S proteasome regulatory particle complex. The 26S proteasome consists of a 20S core particle (CP) and two 19S regulatory subunits (RP). The regulatory particle is made of a lid composed of 9 subunits including PSMD3, a base containing 6 ATPases and few additional components. Interacts with UBQLN1 (via ubiquitin-like domain). Interacts with ERCC6.

Its function is as follows. Component of the 26S proteasome, a multiprotein complex involved in the ATP-dependent degradation of ubiquitinated proteins. This complex plays a key role in the maintenance of protein homeostasis by removing misfolded or damaged proteins, which could impair cellular functions, and by removing proteins whose functions are no longer required. Therefore, the proteasome participates in numerous cellular processes, including cell cycle progression, apoptosis, or DNA damage repair. This is 26S proteasome non-ATPase regulatory subunit 3 (PSMD3) from Homo sapiens (Human).